Consider the following 216-residue polypeptide: Large ribosomal subunit protein uL3 (216 aa).

Residues 135-156 (LGASHGTQRKHRSPGSIGGCAT) are disordered.

Belongs to the universal ribosomal protein uL3 family. As to quaternary structure, part of the 50S ribosomal subunit. Forms a cluster with proteins L14 and L19.

Its function is as follows. One of the primary rRNA binding proteins, it binds directly near the 3'-end of the 23S rRNA, where it nucleates assembly of the 50S subunit. This chain is Large ribosomal subunit protein uL3, found in Thermobifida fusca (strain YX).